Consider the following 317-residue polypeptide: 4-hydroxy-3-methylbut-2-enyl diphosphate reductase (317 aa).

Residue Cys12 participates in [4Fe-4S] cluster binding. 2 residues coordinate (2E)-4-hydroxy-3-methylbut-2-enyl diphosphate: His41 and His74. His41 and His74 together coordinate dimethylallyl diphosphate. The isopentenyl diphosphate site is built by His41 and His74. Cys96 contacts [4Fe-4S] cluster. His124 contributes to the (2E)-4-hydroxy-3-methylbut-2-enyl diphosphate binding site. His124 is a dimethylallyl diphosphate binding site. His124 serves as a coordination point for isopentenyl diphosphate. The Proton donor role is filled by Glu126. Thr168 serves as a coordination point for (2E)-4-hydroxy-3-methylbut-2-enyl diphosphate. Cys198 provides a ligand contact to [4Fe-4S] cluster. Residues Ser226, Ser227, Asn228, and Ser270 each contribute to the (2E)-4-hydroxy-3-methylbut-2-enyl diphosphate site. Ser226, Ser227, Asn228, and Ser270 together coordinate dimethylallyl diphosphate. Positions 226, 227, 228, and 270 each coordinate isopentenyl diphosphate.

This sequence belongs to the IspH family. [4Fe-4S] cluster is required as a cofactor.

The enzyme catalyses isopentenyl diphosphate + 2 oxidized [2Fe-2S]-[ferredoxin] + H2O = (2E)-4-hydroxy-3-methylbut-2-enyl diphosphate + 2 reduced [2Fe-2S]-[ferredoxin] + 2 H(+). It catalyses the reaction dimethylallyl diphosphate + 2 oxidized [2Fe-2S]-[ferredoxin] + H2O = (2E)-4-hydroxy-3-methylbut-2-enyl diphosphate + 2 reduced [2Fe-2S]-[ferredoxin] + 2 H(+). Its pathway is isoprenoid biosynthesis; dimethylallyl diphosphate biosynthesis; dimethylallyl diphosphate from (2E)-4-hydroxy-3-methylbutenyl diphosphate: step 1/1. It functions in the pathway isoprenoid biosynthesis; isopentenyl diphosphate biosynthesis via DXP pathway; isopentenyl diphosphate from 1-deoxy-D-xylulose 5-phosphate: step 6/6. Its function is as follows. Catalyzes the conversion of 1-hydroxy-2-methyl-2-(E)-butenyl 4-diphosphate (HMBPP) into a mixture of isopentenyl diphosphate (IPP) and dimethylallyl diphosphate (DMAPP). Acts in the terminal step of the DOXP/MEP pathway for isoprenoid precursor biosynthesis. This chain is 4-hydroxy-3-methylbut-2-enyl diphosphate reductase, found in Hahella chejuensis (strain KCTC 2396).